The following is a 125-amino-acid chain: MINFGMDIQILLSIIHKFYKIIFTPVNLSLFFCFLVLYMIYSYVKDKKSKRYFDYRVNLYIVIGFWTRFGIRFGIRFLIFILKYIFYFIFDILCYIYWFIFSIFLSLIFNIFIYVKIILLYIVFN.

Its subcellular location is the plastid. This is an uncharacterized protein from Euglena longa (Euglenophycean alga).